A 339-amino-acid chain; its full sequence is 4-hydroxy-2-oxovalerate aldolase (339 aa).

Positions 7–259 constitute a Pyruvate carboxyltransferase domain; the sequence is VILHDMSLRD…QSGIDLYKIM (253 aa). Position 15 to 16 (15 to 16) interacts with substrate; the sequence is RD. Residue Asp16 coordinates Mn(2+). His19 (proton acceptor) is an active-site residue. Substrate-binding residues include Ser169 and His198. His198 and His200 together coordinate Mn(2+). Tyr289 contributes to the substrate binding site.

This sequence belongs to the 4-hydroxy-2-oxovalerate aldolase family.

The catalysed reaction is (S)-4-hydroxy-2-oxopentanoate = acetaldehyde + pyruvate. The chain is 4-hydroxy-2-oxovalerate aldolase from Marinomonas sp. (strain MWYL1).